The chain runs to 354 residues: Lysophosphatidic acid receptor 3 (354 aa).

Residues 1 to 31 lie on the Extracellular side of the membrane; it reads MNECHYDKRMDFFYNRSNTDTADEWTGTKLV. Asn-15 is a glycosylation site (N-linked (GlcNAc...) asparagine). Residues 32–52 form a helical membrane-spanning segment; that stretch reads IVLCVGTFFCLFIFFSNSLVI. Over 53-67 the chain is Cytoplasmic; the sequence is AAVITNRKFHFPFYY. The chain crosses the membrane as a helical span at residues 68–88; sequence LLANLAAADFFAGIAYVFLMF. The Extracellular portion of the chain corresponds to 89-101; it reads NTGPVSKTLTVNR. Residues 102–124 traverse the membrane as a helical segment; it reads WFLRQGLLDTSLTASLANLLVIA. Residues 125 to 146 lie on the Cytoplasmic side of the membrane; sequence VERHMSIMRMRVHSNLTKKRVT. Residues 147–167 form a helical membrane-spanning segment; sequence LLILLVWAIAIFMGAVPTLGW. The Extracellular portion of the chain corresponds to 168 to 186; sequence NCLCNISACSSLAPIYSRS. Asn-172 carries N-linked (GlcNAc...) asparagine glycosylation. The helical transmembrane segment at 187–207 threads the bilayer; sequence YLIFWTVSNLLAFFIMVAVYV. Topologically, residues 208–240 are cytoplasmic; the sequence is RIYMYVKRKTNVLSPHTSGSISRRRAPMKLMKT. A helical transmembrane segment spans residues 241-261; sequence VMTVLGAFVVCWTPGLVVLLL. Topologically, residues 262-276 are extracellular; it reads DGLNCKQCNVQHVKR. Residues 277–295 form a helical membrane-spanning segment; sequence WFLLLALLNSVMNPIIYSY. Over 296-354 the chain is Cytoplasmic; sequence KDEDMYNTMRKMICCALQDSNTERRPSRNPSTIHSRSETGSQYLEDSISQGPVCNKNGS. Cys-309 is lipidated: S-palmitoyl cysteine. Residues 315-354 are disordered; that stretch reads SNTERRPSRNPSTIHSRSETGSQYLEDSISQGPVCNKNGS. A compositionally biased stretch (polar residues) spans 323–354; it reads RNPSTIHSRSETGSQYLEDSISQGPVCNKNGS.

Belongs to the G-protein coupled receptor 1 family. In terms of tissue distribution, most abundantly expressed in testes, kidney, and lung, with moderate levels in small intestine, and low levels in heart, stomach, spleen, and adult and perinatal brain. Little or no expression in embryonic brain, liver, or thymus.

Its subcellular location is the cell membrane. Functionally, receptor for lysophosphatidic acid (LPA), a mediator of diverse cellular activities. Seems to be coupled to the G(i)/G(o) and G(q) families of heteromeric G proteins. This is Lysophosphatidic acid receptor 3 (Lpar3) from Mus musculus (Mouse).